The sequence spans 657 residues: N-acetylgalactosaminyltransferase 7 (657 aa).

At 1-6 (MRLKIG) the chain is on the cytoplasmic side. A helical; Signal-anchor for type II membrane protein transmembrane segment spans residues 7–29 (FILRSLLVVGSFLGLVVLWSSLT). The Lumenal portion of the chain corresponds to 30 to 657 (PRPDDPSPLS…KWEMNNIHSV (628 aa)). Residues 31-65 (RPDDPSPLSRMREDRDVNDPMPNRGGNGLAPGEDR) form a disordered region. Intrachain disulfides connect Cys197–Cys435, Cys426–Cys507, Cys545–Cys562, Cys585–Cys600, and Cys625–Cys640. Positions 206–317 (LLTSSVVIVF…VNWYAPLVAP (112 aa)) are catalytic subdomain A. Substrate is bound by residues Asp247 and Arg277. Mn(2+) contacts are provided by Asp301 and His303. A catalytic subdomain B region spans residues 381-443 (PYRSPAMAGG…PCSRVGHIYR (63 aa)). Trp412 lines the substrate pocket. His440 serves as a coordination point for Mn(2+). Position 443 (Arg443) interacts with substrate. In terms of domain architecture, Ricin B-type lectin spans 532-652 (VDWGEIRGFE…SKTTQKWEMN (121 aa)).

The protein belongs to the glycosyltransferase 2 family. GalNAc-T subfamily. It depends on Mn(2+) as a cofactor. Widely expressed. Expressed in uterus, retina, kidney, small intestine, omentum, stomach and CNS.

It localises to the golgi apparatus membrane. It catalyses the reaction L-seryl-[protein] + UDP-N-acetyl-alpha-D-galactosamine = a 3-O-[N-acetyl-alpha-D-galactosaminyl]-L-seryl-[protein] + UDP + H(+). The enzyme catalyses L-threonyl-[protein] + UDP-N-acetyl-alpha-D-galactosamine = a 3-O-[N-acetyl-alpha-D-galactosaminyl]-L-threonyl-[protein] + UDP + H(+). It participates in protein modification; protein glycosylation. Functionally, glycopeptide transferase involved in O-linked oligosaccharide biosynthesis, which catalyzes the transfer of an N-acetyl-D-galactosamine residue to an already glycosylated peptide. In contrast to other proteins of the family, it does not act as a peptide transferase that transfers GalNAc onto serine or threonine residue on the protein receptor, but instead requires the prior addition of a GalNAc on a peptide before adding additional GalNAc moieties. Some peptide transferase activity is however not excluded, considering that its appropriate peptide substrate may remain unidentified. In Homo sapiens (Human), this protein is N-acetylgalactosaminyltransferase 7 (GALNT7).